The following is a 338-amino-acid chain: Methionine import ATP-binding protein MetN 2 (338 aa).

The ABC transporter domain occupies 2–242 (IEIEKVCVDF…PQHAFTQQLV (241 aa)). 39–46 (GTSGAGKS) is an ATP binding site.

Belongs to the ABC transporter superfamily. Methionine importer (TC 3.A.1.24) family. As to quaternary structure, the complex is composed of two ATP-binding proteins (MetN), two transmembrane proteins (MetI) and a solute-binding protein (MetQ).

The protein resides in the cell inner membrane. The enzyme catalyses L-methionine(out) + ATP + H2O = L-methionine(in) + ADP + phosphate + H(+). It catalyses the reaction D-methionine(out) + ATP + H2O = D-methionine(in) + ADP + phosphate + H(+). Its function is as follows. Part of the ABC transporter complex MetNIQ involved in methionine import. Responsible for energy coupling to the transport system. The chain is Methionine import ATP-binding protein MetN 2 from Salmonella typhi.